The sequence spans 675 residues: Protein distal antenna (675 aa).

Residues 5 to 56 (TKGKRPLRHLTATDKIDAIQRIHDGESKASVARDIGVPESTLRGWCKNEEKL) enclose the HTH psq-type domain. Residues 32-52 (KASVARDIGVPESTLRGWCKN) constitute a DNA-binding region (H-T-H motif). 5 disordered regions span residues 239–269 (QSLRNARPKANTSQSPRTSNLSDVNGDKNPS), 337–393 (LYSS…PEDT), 458–534 (LNII…SKCN), 546–596 (FQNP…AHKS), and 655–675 (ERQQQNAVSSGEERTRVRRRK). Residues 339-368 (SSMPRPSSPQQSSSPPQQHQQVQHHPSTQT) are compositionally biased toward low complexity. The segment covering 369 to 384 (PTPPIVSTPQPTPPSS) has biased composition (pro residues). Positions 469–478 (VKSEPEDLSN) are enriched in basic and acidic residues. The segment covering 479 to 493 (HNHSSSNAAAVAAPA) has biased composition (low complexity). Polar residues predominate over residues 499–508 (FNPSPSTSAK). Residues 513–528 (QEDDEEQAGPADDESP) show a composition bias toward acidic residues. The segment covering 559–579 (NLSIRSNNSPRRRSVSPAVSN) has biased composition (low complexity).

In terms of assembly, homomers. Interacts with itself, danr, ey and dac to form a complex (or complexes) containing the RD factors.

It is found in the nucleus. Functionally, probable transcription factor with a role in the retinal determination (RD) network. Contributes to differentiation of antenna-specific characteristics. The polypeptide is Protein distal antenna (Aedes aegypti (Yellowfever mosquito)).